We begin with the raw amino-acid sequence, 859 residues long: Nitrate reductase [NADPH] (859 aa).

Cysteine 137 contributes to the Mo-molybdopterin binding site. The Cytochrome b5 heme-binding domain maps to 502 to 578 (DVVIKYSEFE…LPSMHLGRLE (77 aa)). Residues histidine 538 and histidine 561 each contribute to the heme site. In terms of domain architecture, FAD-binding FR-type spans 602-713 (RKWHKITLAE…KGPVGEFEYV (112 aa)). Residues 655 to 658 (RAYT), 672 to 676 (LIKVY), phenylalanine 677, 687 to 689 (IMT), serine 737, and threonine 740 each bind FAD. 829–838 (MLLVCGPPGM) serves as a coordination point for NADP(+).

The protein belongs to the nitrate reductase family. As to quaternary structure, homodimer. The cofactor is FAD. Heme serves as cofactor. It depends on Mo-molybdopterin as a cofactor.

It catalyses the reaction nitrite + NADP(+) + H2O = nitrate + NADPH + H(+). In terms of biological role, nitrate reductase is a key enzyme involved in the first step of nitrate assimilation in plants, fungi and bacteria. The protein is Nitrate reductase [NADPH] (YNR1) of Pichia angusta (Yeast).